The primary structure comprises 139 residues: Sec-independent protein translocase protein TatB (139 aa).

Residues 1–21 (MFDMGFLELMLIGVVALLVLG) form a helical membrane-spanning segment. Positions 66–86 (QQRKLDAGLGKVRDEVERHGD) are enriched in basic and acidic residues. The disordered stretch occupies residues 66–139 (QQRKLDAGLG…APSAKDSNAP (74 aa)).

The protein belongs to the TatB family. As to quaternary structure, the Tat system comprises two distinct complexes: a TatABC complex, containing multiple copies of TatA, TatB and TatC subunits, and a separate TatA complex, containing only TatA subunits. Substrates initially bind to the TatABC complex, which probably triggers association of the separate TatA complex to form the active translocon.

The protein resides in the cell inner membrane. In terms of biological role, part of the twin-arginine translocation (Tat) system that transports large folded proteins containing a characteristic twin-arginine motif in their signal peptide across membranes. Together with TatC, TatB is part of a receptor directly interacting with Tat signal peptides. TatB may form an oligomeric binding site that transiently accommodates folded Tat precursor proteins before their translocation. This Chromohalobacter salexigens (strain ATCC BAA-138 / DSM 3043 / CIP 106854 / NCIMB 13768 / 1H11) protein is Sec-independent protein translocase protein TatB.